A 281-amino-acid chain; its full sequence is Phosphatidylglycerol--prolipoprotein diacylglyceryl transferase (281 aa).

4 helical membrane-spanning segments follow: residues 23 to 43 (VGPLAVHWYGLGYVVGILFAW), 71 to 91 (FVIWAALGVVLGGRIGYVLFY), 107 to 127 (WDGGMSFHGGILGTTLAMILF), and 133 to 153 (ILVWSMFDTIAAGVPIGLGVV). An a 1,2-diacyl-sn-glycero-3-phospho-(1'-sn-glycerol)-binding site is contributed by Arg-154. Helical transmembrane passes span 189–209 (LYEAFLEGLVLFFVLFVLVWG), 217–237 (GFVAGAFVTGYGLSRIAVEFF), and 247–267 (LFGGWLTMGMVLSVPMVLLGL).

The protein belongs to the Lgt family.

Its subcellular location is the cell inner membrane. The catalysed reaction is L-cysteinyl-[prolipoprotein] + a 1,2-diacyl-sn-glycero-3-phospho-(1'-sn-glycerol) = an S-1,2-diacyl-sn-glyceryl-L-cysteinyl-[prolipoprotein] + sn-glycerol 1-phosphate + H(+). It functions in the pathway protein modification; lipoprotein biosynthesis (diacylglyceryl transfer). Functionally, catalyzes the transfer of the diacylglyceryl group from phosphatidylglycerol to the sulfhydryl group of the N-terminal cysteine of a prolipoprotein, the first step in the formation of mature lipoproteins. The polypeptide is Phosphatidylglycerol--prolipoprotein diacylglyceryl transferase (Brucella abortus (strain S19)).